Reading from the N-terminus, the 186-residue chain is Mitochondrial import inner membrane translocase subunit Tim22 (186 aa).

Disulfide bonds link cysteine 61–cysteine 133 and cysteine 152–cysteine 171. A run of 3 helical transmembrane segments spans residues alanine 66–isoleucine 86, tyrosine 117–valine 135, and alanine 162–aspartate 182.

Belongs to the Tim17/Tim22/Tim23 family. Core component of the TIM22 complex.

Its subcellular location is the mitochondrion inner membrane. Its function is as follows. Essential core component of the TIM22 complex, a complex that mediates the import and insertion of multi-pass transmembrane proteins into the mitochondrial inner membrane. In the TIM22 complex, it constitutes the voltage-activated and signal-gated channel. Forms a twin-pore translocase that uses the membrane potential as external driving force in 2 voltage-dependent steps. This chain is Mitochondrial import inner membrane translocase subunit Tim22 (timm22), found in Xenopus tropicalis (Western clawed frog).